A 257-amino-acid polypeptide reads, in one-letter code: MFKYQTILSPLDQFEIRNLFSIDTPLLANMNLSITNIGLYMTIAAFIAFYFSILATNHSKITPNKWSLSQETLYATIHSIVVNQINNKNGQAYFPFMYTLFIFILINNLIGMVPYSFASTSHFILTFSLSFTVVLGATVLGFKEHGLKFFSLFVPAGCPLGLLPLLVLIEFISYLARNVSLGLRLAANILSGHMLLNILSGFTYNIMSSGIIFFILGLLPLAFIIAFSGLELGIAFIQSQVFVVLSCSYIKDALELH.

6 consecutive transmembrane segments (helical) span residues 34-54 (ITNI…FSIL), 93-113 (YFPF…IGMV), 122-142 (HFIL…VLGF), 149-169 (FFSL…LVLI), 187-207 (ANIL…YNIM), and 210-230 (GIIF…FSGL).

The protein belongs to the ATPase A chain family. In terms of assembly, F-type ATPases have 2 components, CF(1) - the catalytic core - and CF(0) - the membrane proton channel. CF(1) has five subunits: alpha(3), beta(3), gamma(1), delta(1), epsilon(1). CF(0) has three main subunits: a, b and c.

The protein localises to the mitochondrion inner membrane. Mitochondrial membrane ATP synthase (F(1)F(0) ATP synthase or Complex V) produces ATP from ADP in the presence of a proton gradient across the membrane which is generated by electron transport complexes of the respiratory chain. F-type ATPases consist of two structural domains, F(1) - containing the extramembraneous catalytic core and F(0) - containing the membrane proton channel, linked together by a central stalk and a peripheral stalk. During catalysis, ATP synthesis in the catalytic domain of F(1) is coupled via a rotary mechanism of the central stalk subunits to proton translocation. Key component of the proton channel; it may play a direct role in the translocation of protons across the membrane. This is ATP synthase subunit a (ATP6) from Cochliobolus heterostrophus (Southern corn leaf blight fungus).